Consider the following 451-residue polypeptide: Chromosomal replication initiator protein DnaA (451 aa).

Positions 1–72 (MSLPTSLWDK…TELLDELSDT (72 aa)) are domain I, interacts with DnaA modulators. The tract at residues 72-114 (TPPQIRLQIGSRSTEMPTKNSHEPSHRKAAAPPAGTTISHTQA) is domain II. A compositionally biased stretch (polar residues) spans 81 to 90 (GSRSTEMPTK). The interval 81-106 (GSRSTEMPTKNSHEPSHRKAAAPPAG) is disordered. The domain III, AAA+ region stretch occupies residues 115 to 331 (NINSNFTFDS…GALKRVIANA (217 aa)). Glycine 159, glycine 161, lysine 162, and threonine 163 together coordinate ATP. A domain IV, binds dsDNA region spans residues 332–451 (HFTGQSITVD…YKNLMRILSG (120 aa)).

This sequence belongs to the DnaA family. As to quaternary structure, oligomerizes as a right-handed, spiral filament on DNA at oriC.

Its subcellular location is the cytoplasm. Functionally, plays an essential role in the initiation and regulation of chromosomal replication. ATP-DnaA binds to the origin of replication (oriC) to initiate formation of the DNA replication initiation complex once per cell cycle. Binds the DnaA box (a 9 base pair repeat at the origin) and separates the double-stranded (ds)DNA. Forms a right-handed helical filament on oriC DNA; dsDNA binds to the exterior of the filament while single-stranded (ss)DNA is stabiized in the filament's interior. The ATP-DnaA-oriC complex binds and stabilizes one strand of the AT-rich DNA unwinding element (DUE), permitting loading of DNA polymerase. After initiation quickly degrades to an ADP-DnaA complex that is not apt for DNA replication. Binds acidic phospholipids. This chain is Chromosomal replication initiator protein DnaA, found in Coxiella burnetii (strain CbuK_Q154) (Coxiella burnetii (strain Q154)).